Consider the following 446-residue polypeptide: Coagulation factor VII (446 aa).

The first 24 residues, 1 to 24 (MVPQAHGLLLLCFLLQLQGPLGTA), serve as a signal peptide directing secretion. A propeptide spanning residues 25–41 (VFITQEEAHGVLHRQRR) is cleaved from the precursor. The region spanning 42–86 (ANSLLEELWPGSLERECNEEQCSFEEAREIFKSPERTKQFWIVYS) is the Gla domain. 4-carboxyglutamate is present on residues E47, E48, E55, E57, E60, E61, E66, E67, E70, and E76. A disulfide bridge connects residues C58 and C63. Residues 87-123 (DGDQCASNPCQNGGTCQDHLKSYVCFCLLDFEGRNCE) enclose the EGF-like 1; calcium-binding domain. 10 disulfides stabilise this stretch: C91–C102, C96–C111, C113–C122, C132–C143, C139–C153, C155–C168, C176–C303, C200–C205, C219–C235, and C351–C370. The O-linked (Glc...) serine; alternate glycan is linked to S93. An O-linked (Xyl...) serine; alternate glycan is attached at S93. D104 is modified ((3R)-3-hydroxyaspartate). In terms of domain architecture, EGF-like 2 spans 128–169 (EQLICANENGDCDQYCRDHVGTKRTCSCHEDYTLQPDEVSCK). A glycan (N-linked (GlcNAc...) asparagine) is linked at N186. In terms of domain architecture, Peptidase S1 spans 194-433 (IVGGNVCPKG…YIDWLVRHMD (240 aa)). The active-site Charge relay system is the H234. N244 is a glycosylation site (N-linked (GlcNAc...) asparagine). D283 serves as the catalytic Charge relay system. D379 serves as a coordination point for substrate. C381 and C409 are joined by a disulfide. S385 acts as the Charge relay system in catalysis.

Belongs to the peptidase S1 family. As to quaternary structure, heterodimer of a light chain and a heavy chain linked by a disulfide bond. Post-translationally, the vitamin K-dependent, enzymatic carboxylation of some glutamate residues allows the modified protein to bind calcium. The iron and 2-oxoglutarate dependent 3-hydroxylation of aspartate and asparagine is (R) stereospecific within EGF domains. In terms of processing, can be either O-glucosylated or O-xylosylated at Ser-93 by POGLUT1. In terms of tissue distribution, plasma and liver.

Its subcellular location is the secreted. The enzyme catalyses Selective cleavage of Arg-|-Ile bond in factor X to form factor Xa.. In terms of biological role, initiates the extrinsic pathway of blood coagulation. Serine protease that circulates in the blood in a zymogen form. Factor VII is converted to factor VIIa by factor Xa, factor XIIa, factor IXa, or thrombin by minor proteolysis. In the presence of tissue factor and calcium ions, factor VIIa then converts factor X to factor Xa by limited proteolysis. Factor VIIa also converts factor IX to factor IXa in the presence of tissue factor and calcium. In Mus musculus (Mouse), this protein is Coagulation factor VII (F7).